Consider the following 134-residue polypeptide: Small ribosomal subunit protein uS9 (134 aa).

A disordered region spans residues 113 to 134; sequence REVERKKYGLKKARRAPQFSKR. Residues 120–134 are compositionally biased toward basic residues; the sequence is YGLKKARRAPQFSKR.

It belongs to the universal ribosomal protein uS9 family.

The sequence is that of Small ribosomal subunit protein uS9 from Thermotoga petrophila (strain ATCC BAA-488 / DSM 13995 / JCM 10881 / RKU-1).